The chain runs to 564 residues: Efflux pump DEP3 (564 aa).

A compositionally biased stretch (polar residues) spans 1-12; sequence MVYSSTSSSQNR. The segment at 1 to 48 is disordered; it reads MVYSSTSSSQNRPDGEKHVEAVGSSTRIPSDELVDRGGGDTTTGKQSP. A compositionally biased stretch (basic and acidic residues) spans 29–38; it reads PSDELVDRGG. A run of 14 helical transmembrane segments spans residues 65–85, 91–111, 122–142, 152–172, 185–205, 212–232, 255–275, 281–301, 332–352, 362–382, 386–406, 423–443, 452–472, and 528–548; these read STTLLFALDNTIVANIQPAII, LELLSWIGTGFALGTMFILLW, WVYIFNIFLFEAGSALCGAAP, VIAGVGGSGMYSGTLTYVSVL, STVVWGIGSVLGPVVGGAFAA, WGFYVNLPIGAAFAPVYFLLF, AVIFLAGSACLTVVLTFGGVV, GTVIALWTVTGILLVAFIVLL, FLSSGIILAMTYYVPLYFQFI, VRLLPLIMFMVVASMVNGFLM, GLIPIWYIGGSSLALIGTALM, ILIGAGTGSYIVAGFAIVQSL, AVGAMTIFQDLGMVLFLAISG, and TIWAFFLAAAALSVVCSFPLL.

It belongs to the major facilitator superfamily. TCR/Tet family.

It localises to the cell membrane. Its function is as follows. Efflux pump; part of the gene cluster that mediates the biosynthesis of depudecin, a highly oxidized eleven-carbon linear polyketide that acts as a histone deacetylase (HDAC) inhibitor and makes a small contribution to pathogenesis. Is presumed either to be responsible for exporting depudecin, to provide self-protection, or both. This is Efflux pump DEP3 from Alternaria brassicicola (Dark leaf spot agent).